The chain runs to 271 residues: Formamidopyrimidine-DNA glycosylase (271 aa).

The active-site Schiff-base intermediate with DNA is the P2. E3 functions as the Proton donor in the catalytic mechanism. K58 acts as the Proton donor; for beta-elimination activity in catalysis. DNA contacts are provided by H92, R111, and R152. The segment at 237-271 adopts an FPG-type zinc-finger fold; that stretch reads FVYGREGEACKQCGRVLKHATIGQRATVWCGSCQR. The Proton donor; for delta-elimination activity role is filled by R261.

This sequence belongs to the FPG family. Monomer. It depends on Zn(2+) as a cofactor.

It carries out the reaction Hydrolysis of DNA containing ring-opened 7-methylguanine residues, releasing 2,6-diamino-4-hydroxy-5-(N-methyl)formamidopyrimidine.. The enzyme catalyses 2'-deoxyribonucleotide-(2'-deoxyribose 5'-phosphate)-2'-deoxyribonucleotide-DNA = a 3'-end 2'-deoxyribonucleotide-(2,3-dehydro-2,3-deoxyribose 5'-phosphate)-DNA + a 5'-end 5'-phospho-2'-deoxyribonucleoside-DNA + H(+). Involved in base excision repair of DNA damaged by oxidation or by mutagenic agents. Acts as a DNA glycosylase that recognizes and removes damaged bases. Has a preference for oxidized purines, such as 7,8-dihydro-8-oxoguanine (8-oxoG). Has AP (apurinic/apyrimidinic) lyase activity and introduces nicks in the DNA strand. Cleaves the DNA backbone by beta-delta elimination to generate a single-strand break at the site of the removed base with both 3'- and 5'-phosphates. The protein is Formamidopyrimidine-DNA glycosylase of Xanthomonas axonopodis pv. citri (strain 306).